Consider the following 790-residue polypeptide: MAQQQGQGAGTTTVAMMSRNPSYYYSGEGELSLAVQRQDSLYRDASRAGQHEQAHGEGWARTLRLAFQCFGVLYGDIGTSPLYVYSTTFDGGIRHTDDLLGVLSLIIYSFLLFTIIKYVYIALRANDDGDGGTFALYSLISRHAKVSLVPNQQAEDELHLHISKSSSLRRPSVQRLASTAEERAQWVKDLLENSRPVRISLFLLTILATAMVISDACLTPAISVLSAVGGLKDKAPHLNTEQVVWVTVGILVMLFAVQRFGTDKVGYLFAPVVLLWLLLIGGVGVYNLAAHDVGVLRAFNPKYILDYFRRNGRHGWVSLGGVLLCFTGTEALFADLGCFSIRSIQLSFAFGLVPAVLLAYAGQAAYLRVYPDHVGDAFYASTPQVLFWPTLVLALAASVVGSQAMISCAFATISHSQAMGCFPRVKVVHTSRQYQGQVYIPEINLLLGAAACVVTVAARDTVVIGEAHGICVVLVMLITTLLLTVVMVLVWRVNIGWVLVFACVFASTESVYLTSVLYKFAHGGYIPVAMSAVLMGVMGVWHYVHVRRYKYEMERTVSTERVRELVSRRELQRVPGVGLFYTDLVQGIPPVFPHLIDKIPSIHTVLLFVSVKHLPVPHVDPSERFLFRQVEPQEHKLFRCVARYGYRDRLEDARDFVANLVERLQYYVRDVNLYGAAANNKVSYPSSRCDSMGIPKSASYAERLQLQRARSVAMLHSHSQHQRFIQREMEKGVVFILGESEVVARPHSSLLKKLVVNYAYSFLRRNCRQGDKMLAIPRSQLLKVGMSYEI.

The Cytoplasmic portion of the chain corresponds to 1–64; the sequence is MAQQQGQGAG…HGEGWARTLR (64 aa). Residues 65–85 traverse the membrane as a helical segment; the sequence is LAFQCFGVLYGDIGTSPLYVY. Residues 86 to 98 lie on the Extracellular side of the membrane; sequence STTFDGGIRHTDD. Residues 99-119 traverse the membrane as a helical segment; the sequence is LLGVLSLIIYSFLLFTIIKYV. Over 120 to 198 the chain is Cytoplasmic; it reads YIALRANDDG…DLLENSRPVR (79 aa). The chain crosses the membrane as a helical span at residues 199 to 219; the sequence is ISLFLLTILATAMVISDACLT. At 220–236 the chain is on the extracellular side; that stretch reads PAISVLSAVGGLKDKAP. Residues 237–257 traverse the membrane as a helical segment; the sequence is HLNTEQVVWVTVGILVMLFAV. Over 258–264 the chain is Cytoplasmic; sequence QRFGTDK. Residues 265 to 285 traverse the membrane as a helical segment; sequence VGYLFAPVVLLWLLLIGGVGV. Over 286–318 the chain is Extracellular; that stretch reads YNLAAHDVGVLRAFNPKYILDYFRRNGRHGWVS. The helical transmembrane segment at 319–339 threads the bilayer; it reads LGGVLLCFTGTEALFADLGCF. The Cytoplasmic segment spans residues 340–345; that stretch reads SIRSIQ. The helical transmembrane segment at 346 to 366 threads the bilayer; sequence LSFAFGLVPAVLLAYAGQAAY. The Extracellular segment spans residues 367-385; sequence LRVYPDHVGDAFYASTPQV. The chain crosses the membrane as a helical span at residues 386 to 406; sequence LFWPTLVLALAASVVGSQAMI. The Cytoplasmic segment spans residues 407–437; sequence SCAFATISHSQAMGCFPRVKVVHTSRQYQGQ. The helical transmembrane segment at 438 to 458 threads the bilayer; sequence VYIPEINLLLGAAACVVTVAA. At 459 to 469 the chain is on the extracellular side; that stretch reads RDTVVIGEAHG. A helical membrane pass occupies residues 470 to 490; sequence ICVVLVMLITTLLLTVVMVLV. At 491 to 492 the chain is on the cytoplasmic side; sequence WR. A helical membrane pass occupies residues 493–513; that stretch reads VNIGWVLVFACVFASTESVYL. The Extracellular portion of the chain corresponds to 514 to 519; sequence TSVLYK. Residues 520–540 form a helical membrane-spanning segment; the sequence is FAHGGYIPVAMSAVLMGVMGV. At 541-790 the chain is on the cytoplasmic side; the sequence is WHYVHVRRYK…LLKVGMSYEI (250 aa).

The protein belongs to the HAK/KUP transporter (TC 2.A.72.3) family.

It is found in the membrane. High-affinity potassium transporter. The chain is Potassium transporter 22 (HAK22) from Oryza sativa subsp. japonica (Rice).